A 529-amino-acid polypeptide reads, in one-letter code: Type I restriction enzyme StySJI methylase subunit (529 aa).

Residues 148–153, 178–180, and Glu216 each bind S-adenosyl-L-methionine; these read QYFTPR and TAG. Residues 405–444 form a disordered region; it reads YGEDPHGLSPREEGEWSFNAEESEVADSEENKNTDQHQAT. Over residues 407 to 418 the composition is skewed to basic and acidic residues; the sequence is EDPHGLSPREEG.

Belongs to the N(4)/N(6)-methyltransferase family. As to quaternary structure, the type I restriction/modification system is composed of three polypeptides R, M and S; the restriction enzyme has stoichiometry R(2)M(2)S(1) while the methyltransferase is M(2)S(1).

The enzyme catalyses a 2'-deoxyadenosine in DNA + S-adenosyl-L-methionine = an N(6)-methyl-2'-deoxyadenosine in DNA + S-adenosyl-L-homocysteine + H(+). Its function is as follows. The subtype gamma methyltransferase (M) subunit of a type I restriction enzyme. The M and S subunits together form a methyltransferase (MTase) that methylates two adenine residues of the sequence 5'-GAGN(6)GTRC-3'. In the presence of the R subunit the complex can also act as an endonuclease, binding to the same target sequence but cutting the DNA some distance from this site. Whether the DNA is cut or modified depends on the methylation state of the target sequence. When the target site is unmodified, the DNA is cut. When the target site is hemimethylated, the complex acts as a maintenance MTase modifying the DNA so that both strands become methylated. After locating a non-methylated recognition site, the enzyme complex serves as a molecular motor that translocates DNA in an ATP-dependent manner until a collision occurs that triggers cleavage. The sequence is that of Type I restriction enzyme StySJI methylase subunit from Salmonella typhimurium (strain LT2 / SGSC1412 / ATCC 700720).